Consider the following 387-residue polypeptide: NADPH-dependent aldehyde reductase YqhD (387 aa).

Gly-38, Ser-40, Asn-68, Gly-95, Ser-96, Asp-99, Thr-138, Asn-147, Gly-149, Lys-160, Tyr-179, and Thr-182 together coordinate NADP(+). Zn(2+) contacts are provided by Asp-194, His-198, His-267, and His-281.

This sequence belongs to the iron-containing alcohol dehydrogenase family. Homodimer. The crystals contain two dimers in the asymmetric unit. The cofactor is Zn(2+).

The enzyme catalyses a primary alcohol + NADP(+) = an aldehyde + NADPH + H(+). The catalysed reaction is butan-1-ol + NADP(+) = butanal + NADPH + H(+). It carries out the reaction 1-propanol + NADP(+) = propanal + NADPH + H(+). It catalyses the reaction allyl alcohol + NADP(+) = acrolein + NADPH + H(+). Functionally, exhibits NADPH-dependent reductase activity for a broad range of short-chain aldehydes. Shows highest catalytic efficiency toward butanal, propanal and the highly toxic aldehydes acrolein and malondialdehyde (MDA), which are produced mainly during lipid peroxidation. Mediates resistance to reactive oxygen species (ROS) elicitors, such as paraquat and potassium tellurite, probably by protecting the cell against the toxic effects of reactive aldehydes derived from membrane lipid peroxidation. Also acts, with lower efficiency, on acetaldehyde, glyceraldehyde, glycolaldehyde, methylglyoxal, glyoxal and hydroxyacetone. Could be involved in glyoxal metabolism, by catalyzing the reduction of glyoxal to glycolaldehyde, and further to 1,2-ethandiol. Catalyzes the reduction of isobutyraldehyde (2-methylpropanal) to isobutanol, and probably contributes to the production of isobutanol. Can probably catalyze the reduction of glutaraldehyde, a widely used biocide, to 1,5-pentanediol, which is non-toxic. Overexpression of YqhD protects the cells against glutaraldehyde toxicity. Can catalyze in vitro the NADPH-dependent reduction of furfural, a natural product of lignocellulosic decomposition, to the less toxic product, furfuryl alcohol. However, it is unlikely that furfural is a physiological substrate. In terms of biological role, in contrast, Sulzenbacher et al. detected significant activities only in the presence of alcohol and NADP(+). They reported in vitro NADP(+)-dependent alcohol dehydrogenase (ADH) activity towards various alcohols, with a preference for alcohols longer than C(3), but the affinity for the substrates is poor, suggesting that these compounds are not the physiological substrates. Perez et al. did not detect dehydrogenase activity with short and medium chain alcohols such as methanol, ethanol, propanol, butanol or isopropanol. In Escherichia coli (strain K12), this protein is NADPH-dependent aldehyde reductase YqhD (yqhD).